Here is a 61-residue protein sequence, read N- to C-terminus: Small ribosomal subunit protein uS14B (61 aa).

Cys24, Cys27, Cys40, and Cys43 together coordinate Zn(2+).

It belongs to the universal ribosomal protein uS14 family. Zinc-binding uS14 subfamily. In terms of assembly, part of the 30S ribosomal subunit. Contacts proteins S3 and S10. The cofactor is Zn(2+).

In terms of biological role, binds 16S rRNA, required for the assembly of 30S particles and may also be responsible for determining the conformation of the 16S rRNA at the A site. This Lacticaseibacillus paracasei (strain ATCC 334 / BCRC 17002 / CCUG 31169 / CIP 107868 / KCTC 3260 / NRRL B-441) (Lactobacillus paracasei) protein is Small ribosomal subunit protein uS14B.